We begin with the raw amino-acid sequence, 112 residues long: ATP synthase subunit c (112 aa).

The next 2 membrane-spanning stretches (helical) occupy residues 36-56 (FSVL…AIGM) and 81-101 (MFIA…IALI).

This sequence belongs to the ATPase C chain family. In terms of assembly, F-type ATPases have 2 components, F(1) - the catalytic core - and F(0) - the membrane proton channel. F(1) has five subunits: alpha(3), beta(3), gamma(1), delta(1), epsilon(1). F(0) has three main subunits: a(1), b(2) and c(10-14). The alpha and beta chains form an alternating ring which encloses part of the gamma chain. F(1) is attached to F(0) by a central stalk formed by the gamma and epsilon chains, while a peripheral stalk is formed by the delta and b chains.

It localises to the cell inner membrane. Functionally, f(1)F(0) ATP synthase produces ATP from ADP in the presence of a proton or sodium gradient. F-type ATPases consist of two structural domains, F(1) containing the extramembraneous catalytic core and F(0) containing the membrane proton channel, linked together by a central stalk and a peripheral stalk. During catalysis, ATP synthesis in the catalytic domain of F(1) is coupled via a rotary mechanism of the central stalk subunits to proton translocation. The chain is ATP synthase subunit c from Campylobacter jejuni subsp. jejuni serotype O:2 (strain ATCC 700819 / NCTC 11168).